The chain runs to 509 residues: Circadian clock oscillator protein KaiC (509 aa).

KaiC domains lie at 1–243 (MKDK…IIVF) and 257–509 (IRIS…IEKN). Glycine 45, threonine 46, glycine 47, lysine 48, threonine 49, serine 85, lysine 220, leucine 221, arginine 222, threonine 224, histidine 226, aspartate 237, threonine 286, glycine 287, threonine 288, glycine 289, lysine 290, and threonine 291 together coordinate ATP. Residue threonine 49 coordinates Mg(2+). Mg(2+) is bound by residues threonine 291 and glutamate 314. An ATP-binding site is contributed by tryptophan 327. A Phosphoserine; by autocatalysis modification is found at serine 427. Threonine 428 carries the phosphothreonine; by autocatalysis modification. Arginine 447, lysine 453, methionine 454, arginine 455, serine 457, histidine 459, and lysine 461 together coordinate ATP.

The protein belongs to the KaiC family. As to quaternary structure, homohexamer; hexamerization is dependent on ATP-binding. Component of the KaiBC complex. KaiC interacts with SasA, activating its autokinase function and leading to RpaA activation. Mg(2+) is required as a cofactor. Post-translationally, phosphorylated on serine and threonine residues by autocatalysis. Has a 4 step phosphorylation cycle; the autokinase acts first on Thr-428, then Ser-427. When Ser-427 is modified KaiC switches to an autophosphatase mode, acting first on phospho-Thr-428 then phospho-Ser-427.

The catalysed reaction is L-seryl-[protein] + ATP = O-phospho-L-seryl-[protein] + ADP + H(+). It carries out the reaction L-threonyl-[protein] + ATP = O-phospho-L-threonyl-[protein] + ADP + H(+). It catalyses the reaction ATP + H2O = ADP + phosphate + H(+). Central component of the KaiBC oscillator complex, which constitutes the main circadian regulator in cyanobacteria. Its composition changes during the circadian cycle to control KaiC phosphorylation. Autophosphorylates and has a weak ATPase activity; ATPase activity defines the circadian period. The protein is Circadian clock oscillator protein KaiC of Prochlorococcus marinus subsp. pastoris (strain CCMP1986 / NIES-2087 / MED4).